The sequence spans 160 residues: Ribosomal RNA large subunit methyltransferase H (160 aa).

Residues Leu76, Gly108, and Leu127–Trp132 each bind S-adenosyl-L-methionine.

It belongs to the RNA methyltransferase RlmH family. Homodimer.

Its subcellular location is the cytoplasm. It catalyses the reaction pseudouridine(1915) in 23S rRNA + S-adenosyl-L-methionine = N(3)-methylpseudouridine(1915) in 23S rRNA + S-adenosyl-L-homocysteine + H(+). Functionally, specifically methylates the pseudouridine at position 1915 (m3Psi1915) in 23S rRNA. This chain is Ribosomal RNA large subunit methyltransferase H, found in Rhizobium johnstonii (strain DSM 114642 / LMG 32736 / 3841) (Rhizobium leguminosarum bv. viciae).